Consider the following 154-residue polypeptide: NADPH-dependent 7-cyano-7-deazaguanine reductase (154 aa).

Positions Met1–Glu24 are disordered. Cys52 (thioimide intermediate) is an active-site residue. Asp59 functions as the Proton donor in the catalytic mechanism. Residues Val74 to Ser76 and His93 to Glu94 each bind substrate.

This sequence belongs to the GTP cyclohydrolase I family. QueF type 1 subfamily.

It localises to the cytoplasm. It catalyses the reaction 7-aminomethyl-7-carbaguanine + 2 NADP(+) = 7-cyano-7-deazaguanine + 2 NADPH + 3 H(+). The protein operates within tRNA modification; tRNA-queuosine biosynthesis. In terms of biological role, catalyzes the NADPH-dependent reduction of 7-cyano-7-deazaguanine (preQ0) to 7-aminomethyl-7-deazaguanine (preQ1). In Sinorhizobium fredii (strain NBRC 101917 / NGR234), this protein is NADPH-dependent 7-cyano-7-deazaguanine reductase.